Reading from the N-terminus, the 60-residue chain is Large ribosomal subunit protein uL30 (60 aa).

This sequence belongs to the universal ribosomal protein uL30 family. Part of the 50S ribosomal subunit.

This is Large ribosomal subunit protein uL30 from Streptococcus pneumoniae (strain Hungary19A-6).